The sequence spans 365 residues: Aminomethyltransferase (365 aa).

The protein belongs to the GcvT family. The glycine cleavage system is composed of four proteins: P, T, L and H.

It carries out the reaction N(6)-[(R)-S(8)-aminomethyldihydrolipoyl]-L-lysyl-[protein] + (6S)-5,6,7,8-tetrahydrofolate = N(6)-[(R)-dihydrolipoyl]-L-lysyl-[protein] + (6R)-5,10-methylene-5,6,7,8-tetrahydrofolate + NH4(+). The glycine cleavage system catalyzes the degradation of glycine. The chain is Aminomethyltransferase from Yersinia pseudotuberculosis serotype O:3 (strain YPIII).